Reading from the N-terminus, the 685-residue chain is Protein snwA (685 aa).

Disordered stretches follow at residues 1–62 (MTSL…GYLP), 88–112 (RKGK…TSIV), 347–573 (LAED…DSIY), and 605–685 (AVSN…SKKR). Low complexity-rich tracts occupy residues 30-41 (PQQQKQQQQQQQ) and 93-102 (KSSNSNTSNM). An SNW region spans residues 194-360 (ATYIKYTPSN…VRNERSGIIQ (167 aa)). Over residues 370-381 (DSDNDNDNDSSS) the composition is skewed to acidic residues. Residues 399–494 (RSTERIPSRN…DRYSKRRSDS (96 aa)) show a composition bias toward basic and acidic residues. Residues 495 to 507 (DSDSDSDSSDSED) show a composition bias toward acidic residues. Positions 508–556 (ERVRRERKEKLERDKIRMEKKRELEREYRLEASGKKSKFNRDQDRDISE) are enriched in basic and acidic residues. The segment covering 618 to 631 (EDNTSIQDVLSNSR) has biased composition (polar residues). Residues 646–685 (PNKEFSGTDRSKDRTGPVAFEKEKKKSDDPFGFDDFSKKR) show a composition bias toward basic and acidic residues.

This sequence belongs to the SNW family. In terms of assembly, interacts with cypE.

The protein localises to the nucleus. This Dictyostelium discoideum (Social amoeba) protein is Protein snwA (snwA).